Reading from the N-terminus, the 1065-residue chain is Putative guanine nucleotide-exchange factor SED4 (1065 aa).

Residues Met-1–Lys-346 are Cytoplasmic-facing. Ser-65 is modified (phosphoserine). WD repeat units lie at residues Phe-259–Leu-298 and Val-302–Leu-341. A helical; Signal-anchor for type II membrane protein transmembrane segment spans residues Phe-347 to Tyr-365. At Lys-366–Leu-1065 the chain is on the lumenal side. N-linked (GlcNAc...) asparagine glycosylation occurs at Asn-388. Disordered stretches follow at residues Thr-458 to Phe-477, Val-482 to Ile-520, and Gln-551 to Asp-625. Residues Ser-465–Ser-476 show a composition bias toward low complexity. Over residues Val-482 to Ile-495 the composition is skewed to polar residues. A compositionally biased stretch (low complexity) spans Ser-568–Thr-621. N-linked (GlcNAc...) asparagine glycosylation occurs at Asn-620. 4 tandem repeats follow at residues Ile-824–Leu-833, Ala-834–Leu-843, Ala-844–Leu-853, and Ala-854–Phe-863. The tract at residues Ile-824–Phe-863 is 4 X 10 AA tandem repeats. The N-linked (GlcNAc...) asparagine glycan is linked to Asn-1039. Residues His-1062–Leu-1065 carry the Prevents secretion from ER motif.

The protein belongs to the WD repeat SEC12 family.

The protein localises to the endoplasmic reticulum membrane. It is found in the golgi apparatus membrane. Putative guanine nucleotide-exchange factor (GEF) involved in the formation or budding of transport vesicles from the ER. Positive regulator of SAR1 probably through inhibition of the GTPase activation by SEC23. The polypeptide is Putative guanine nucleotide-exchange factor SED4 (SED4) (Saccharomyces cerevisiae (strain ATCC 204508 / S288c) (Baker's yeast)).